We begin with the raw amino-acid sequence, 329 residues long: Ephrin-B1 (329 aa).

Positions 1–20 (MEGLRRLLGLLLVLYRLCSA) are cleaved as a signal peptide. At 21–226 (LGKNLEPVTW…FFNSKIAVFA (206 aa)) the chain is on the extracellular side. The Ephrin RBD domain occupies 23-157 (KNLEPVTWNS…TRSMKIIMKV (135 aa)). 2 disulfide bridges follow: Cys57-Cys94 and Cys82-Cys146. Asn132 carries N-linked (GlcNAc...) asparagine glycosylation. A disordered region spans residues 163–192 (AVPPEQLTTTRPSKEADNTGKIATFGPWNG). Residue Asn203 is glycosylated (N-linked (GlcNAc...) asparagine). The chain crosses the membrane as a helical span at residues 227–247 (AIGAGCVIFILIIIFLVVLLI). The Cytoplasmic portion of the chain corresponds to 248–329 (KIRKRHRKHT…QSPANIYYKV (82 aa)). The PDZ-binding signature appears at 327–329 (YKV).

The protein belongs to the ephrin family. In terms of assembly, interacts with TLE4 through the PDZ-binding motif. Post-translationally, inducible phosphorylation of tyrosine residues in the cytoplasmic domain. Tyrosine phosphorylation inhibits TLE4-binding. Expressed at low levels in most tissues with highest levels in the kidney, oocytes, ovary and testis.

Its subcellular location is the membrane. Its function is as follows. Cell surface transmembrane ligand for Eph receptors, a family of receptor tyrosine kinases which are crucial for migration, repulsion and adhesion during neuronal, vascular and epithelial development. Binds promiscuously Eph receptors residing on adjacent cells, leading to contact-dependent bidirectional signaling into neighboring cells. The signaling pathway downstream of the receptor is referred to as forward signaling while the signaling pathway downstream of the ephrin ligand is referred to as reverse signaling. May have a role in the developing mesenchymal and nervous tissue. The chain is Ephrin-B1 (efnb1) from Xenopus laevis (African clawed frog).